The sequence spans 546 residues: MAKIIKFDQEGRNAILKGVNTLADAVKVTLGPKGRNVIIEKSFGSPLITKDGVTVAKEIELEDKFENMGAQLVKEVASKTSDVAGDGTTTATVLAQAIYRQGSKLVAAGHNPMEIKRGIDSAVETIVAELQKISKPIKDHKEIAQVGTISANNDKTIGGIIAEAMEKVGKEGVITVEEAKAMETSLETVEGMQFDRGYLSPYFVTDPERMEASLENANILIHDKKISNMKDLLPILEQTAKSGRPLLIIAEDIEGEALATLVVNKLRGVLNICAVKAPGFGDRRKAMLEDIAVLTGGKVISEELGFKLENATFDMLGTAKRVTIDKDNTTIIDGDGSEADIQGRVKQIRAQIEETSSDYDREKLQERLAKLVGGVAVIKVGAATETEMKEKKARVEDALHATRAAVDEGIVPGGGVAYIRSLGALEGISLPAEQQFGVTLIKRALEEPIRQIAQNAGVDGSIVVDKVKNGKDAFGFNAADDEYVDMIAAGIIDPTKVSRSALQNAASVAGLMLTTEAMIADKPKEEAAMPAMPGGMGGMGGMGGMM.

ATP is bound by residues Thr29–Pro32, Lys50, Asp86–Thr90, Gly414, Asn477–Ala479, and Asp493.

It belongs to the chaperonin (HSP60) family. Forms a cylinder of 14 subunits composed of two heptameric rings stacked back-to-back. Interacts with the co-chaperonin GroES.

Its subcellular location is the cytoplasm. The enzyme catalyses ATP + H2O + a folded polypeptide = ADP + phosphate + an unfolded polypeptide.. In terms of biological role, together with its co-chaperonin GroES, plays an essential role in assisting protein folding. The GroEL-GroES system forms a nano-cage that allows encapsulation of the non-native substrate proteins and provides a physical environment optimized to promote and accelerate protein folding. The polypeptide is Chaperonin GroEL (Geobacter metallireducens (strain ATCC 53774 / DSM 7210 / GS-15)).